A 498-amino-acid chain; its full sequence is MSKKGKKAKVPLSDEEQLLLFQQKLLAEEEMAKKKERLLNQFLKDKLAKEEHNSALNLNKINTQWRTVLREIKTRELHKDIEILSQTFERVVDCKDSVIKSLAKDLSEAEEQHAHALRSHLHSIDQLLALQRCRLNLLEENYNMELEALTKEFETERKTIIDQHEKEIHYLQDVFMAMEQNYIDSEYESKLEFQSMWDDLKNKNLEEKHFLRLQLENIVEDLWRRFQDALKNYTDATEDRKIAFETLKVKDEKSSREIEAQMKKIQKLQDSIIIFKGKILVHSRESEEQNQDIREDKELVLVQLRKLKAQRTQARGIAQENLVKLTLESSATLKALREIVDKGEKILKLAEICRKFETEEEKVLPFYSSVLTPKEQEEIETMDLEEFNEELGKVIMDYKGMENFWKRYNKVKLEQLSLRHRRAQLLEINEKLREMLRQYLDGISVSDEVLSQLNPLFIVNHRSNLPQLLPMPTAQPGDKKPPATYNIIEAAHVVSHTL.

3 coiled-coil regions span residues 98–160 (VIKS…RKTI), 250–311 (KDEK…KAQR), and 417–441 (SLRH…QYLD).

It belongs to the DRC2 family. As to quaternary structure, component of the nexin-dynein regulatory complex (N-DRC). Interacts with DRC1.

It localises to the cytoplasm. The protein resides in the cytoskeleton. The protein localises to the flagellum basal body. Its subcellular location is the cell projection. It is found in the cilium. It localises to the flagellum. The protein resides in the flagellum axoneme. Component of the nexin-dynein regulatory complex (N-DRC), a key regulator of ciliary/flagellar motility which maintains the alignment and integrity of the distal axoneme and regulates microtubule sliding in motile axonemes. Plays a critical role in the assembly of N-DRC and also stabilizes the assembly of multiple inner dynein arms and radial spokes. Coassembles with DRC1 to form a central scaffold needed for assembly of the N-DRC and its attachment to the outer doublet microtubules. The chain is Dynein regulatory complex subunit 2 (CCDC65) from Bos taurus (Bovine).